We begin with the raw amino-acid sequence, 485 residues long: NADH-quinone oxidoreductase subunit N (485 aa).

Transmembrane regions (helical) follow at residues 8–28, 35–55, 71–91, 105–125, 127–147, 159–179, 203–223, 235–255, 271–291, 297–317, 326–346, 373–393, 408–430, and 455–475; these read LIALLPLLIVGLTVVVVMLSI, FLNATLSVIGLNAALVSLWFV, GFAMLYTGLVLLASLATCTFA, FYLLVLIAALGGILLANANHL, ALFLGIELISLPLFGLIGYAF, YTILSAAASSFLLFGMALVYA, LLAGFGLMIVGLGFKLSLVPF, PAPVSTFLATASKIAIFGVVM, IVLGVIAFASIIFGNLMALSQ, LLGYSSISHLGYLLVALIALQ, VGVYLAGYLFSSLGAFGVVSL, AAVMTVMMLSLAGIPMTLGFI, WWLVAAVVVGSAIGLYYYLRVAV, and IVVLISALLVLVLGIYPQPLI.

Belongs to the complex I subunit 2 family. As to quaternary structure, NDH-1 is composed of 13 different subunits. Subunits NuoA, H, J, K, L, M, N constitute the membrane sector of the complex.

It is found in the cell inner membrane. It catalyses the reaction a quinone + NADH + 5 H(+)(in) = a quinol + NAD(+) + 4 H(+)(out). In terms of biological role, NDH-1 shuttles electrons from NADH, via FMN and iron-sulfur (Fe-S) centers, to quinones in the respiratory chain. The immediate electron acceptor for the enzyme in this species is believed to be ubiquinone. Couples the redox reaction to proton translocation (for every two electrons transferred, four hydrogen ions are translocated across the cytoplasmic membrane), and thus conserves the redox energy in a proton gradient. The chain is NADH-quinone oxidoreductase subunit N from Citrobacter koseri (strain ATCC BAA-895 / CDC 4225-83 / SGSC4696).